Reading from the N-terminus, the 123-residue chain is Alpha-lactalbumin (123 aa).

The C-type lysozyme domain maps to 1–123 (KQFTKCELSQ…KLEQWLCEKE (123 aa)). 4 cysteine pairs are disulfide-bonded: Cys-6-Cys-120, Cys-28-Cys-111, Cys-61-Cys-77, and Cys-73-Cys-91. An N-linked (GlcNAc...) asparagine glycan is attached at Asn-45. Ca(2+)-binding residues include Lys-79, Asp-82, Asp-84, Asp-87, and Asp-88.

Belongs to the glycosyl hydrolase 22 family. In terms of assembly, lactose synthase (LS) is a heterodimer of a catalytic component, beta1,4-galactosyltransferase (beta4Gal-T1) and a regulatory component, alpha-lactalbumin (LA). In terms of tissue distribution, mammary gland specific. Secreted in milk.

The protein localises to the secreted. Its function is as follows. Regulatory subunit of lactose synthase, changes the substrate specificity of galactosyltransferase in the mammary gland making glucose a good acceptor substrate for this enzyme. This enables LS to synthesize lactose, the major carbohydrate component of milk. In other tissues, galactosyltransferase transfers galactose onto the N-acetylglucosamine of the oligosaccharide chains in glycoproteins. The sequence is that of Alpha-lactalbumin (LALBA) from Papio cynocephalus (Yellow baboon).